Here is a 320-residue protein sequence, read N- to C-terminus: Probable cell division protein WhiA (320 aa).

The segment at residues 276-310 is a DNA-binding region (H-T-H motif); that stretch reads TLKELGEMVAGGKISKSGINHRLRKIDEIAERLRA.

This sequence belongs to the WhiA family.

In terms of biological role, involved in cell division and chromosome segregation. In Geobacillus thermodenitrificans (strain NG80-2), this protein is Probable cell division protein WhiA.